Here is a 437-residue protein sequence, read N- to C-terminus: Enolase-related protein 1 (437 aa).

Substrate-binding residues include His-160 and Glu-169. The active-site Proton donor is Glu-212. 3 residues coordinate Mg(2+): Asp-247, Glu-296, and Asp-321. Glu-296 and Asp-321 together coordinate substrate. Lys-346 acts as the Proton acceptor in catalysis. Substrate-binding positions include 373–376 (SHRS) and Lys-397.

Belongs to the enolase family. Requires Mg(2+) as cofactor.

It catalyses the reaction (2R)-2-phosphoglycerate = phosphoenolpyruvate + H2O. It participates in carbohydrate degradation; glycolysis; pyruvate from D-glyceraldehyde 3-phosphate: step 4/5. The protein is Enolase-related protein 1 (ERR1) of Saccharomyces cerevisiae (strain ATCC 204508 / S288c) (Baker's yeast).